Here is a 178-residue protein sequence, read N- to C-terminus: Large ribosomal subunit protein uL6 (178 aa).

The protein belongs to the universal ribosomal protein uL6 family. Part of the 50S ribosomal subunit.

This protein binds to the 23S rRNA, and is important in its secondary structure. It is located near the subunit interface in the base of the L7/L12 stalk, and near the tRNA binding site of the peptidyltransferase center. The polypeptide is Large ribosomal subunit protein uL6 (Ligilactobacillus salivarius (strain UCC118) (Lactobacillus salivarius)).